A 127-amino-acid polypeptide reads, in one-letter code: Small ribosomal subunit protein uS12 (127 aa).

The residue at position 89 (Asp-89) is a 3-methylthioaspartic acid. The interval 104–127 (TQGVKDRKQARSKYGTKRAKAGKK) is disordered. Basic residues predominate over residues 113 to 127 (ARSKYGTKRAKAGKK).

This sequence belongs to the universal ribosomal protein uS12 family. Part of the 30S ribosomal subunit. Contacts proteins S8 and S17. May interact with IF1 in the 30S initiation complex.

Its function is as follows. With S4 and S5 plays an important role in translational accuracy. Functionally, interacts with and stabilizes bases of the 16S rRNA that are involved in tRNA selection in the A site and with the mRNA backbone. Located at the interface of the 30S and 50S subunits, it traverses the body of the 30S subunit contacting proteins on the other side and probably holding the rRNA structure together. The combined cluster of proteins S8, S12 and S17 appears to hold together the shoulder and platform of the 30S subunit. This chain is Small ribosomal subunit protein uS12, found in Herminiimonas arsenicoxydans.